The sequence spans 1044 residues: Pre-mRNA-splicing factor ATP-dependent RNA helicase DEAH1 (1044 aa).

A disordered region spans residues 106–206 (EVVVEKKSSV…TLSKKEKEEA (101 aa)). Residues 108–121 (VVEKKSSVSESRKS) show a composition bias toward basic and acidic residues. The segment covering 122–132 (DKGKKRFRKKS) has biased composition (basic residues). Phosphoserine is present on residues S135 and S138. The span at 157–166 (EEDDGSESEE) shows a compositional bias: acidic residues. The span at 167-206 (ERVRDQKEREELEQHLKDRDTARTRKLTEQTLSKKEKEEA) shows a compositional bias: basic and acidic residues. In terms of domain architecture, Helicase ATP-binding spans 414–577 (LKAVEEHQVL…FDTAPIFSFP (164 aa)). 427 to 434 (GDTGSGKT) is an ATP binding site. A DEAH box motif is present at residues 524-527 (DEAH). In terms of domain architecture, Helicase C-terminal spans 600–775 (IVTILTIHVR…SVVLALKSLG (176 aa)).

It belongs to the DEAD box helicase family. DEAH subfamily. PRP2 sub-subfamily. Widely expressed.

It carries out the reaction ATP + H2O = ADP + phosphate + H(+). Its function is as follows. Involved in pre-mRNA splicing. The sequence is that of Pre-mRNA-splicing factor ATP-dependent RNA helicase DEAH1 from Arabidopsis thaliana (Mouse-ear cress).